The primary structure comprises 868 residues: Rifampicin phosphotransferase (868 aa).

The interval 1–313 (MSSFVLDFQE…IYIVQSRPIT (313 aa)) is ATP-binding. 8 residues coordinate ATP: lysine 22, arginine 116, glycine 131, threonine 135, glutamine 182, glutamate 296, glutamine 308, and arginine 310. The interval 326–756 (NHVYISVGHQ…TSDGEIITGK (431 aa)) is rifampicin-binding. Residues 769–867 (GLPVSSGVVE…VHGTEGYIEV (99 aa)) are swivel phosphohistidine. Residue histidine 827 is the Tele-phosphohistidine intermediate of the active site.

This sequence belongs to the rifampicin phosphotransferase family.

The catalysed reaction is rifampicin + ATP + H2O = 21-phosphorifampicin + AMP + phosphate + 2 H(+). Catalyzes the phosphorylation of rifampicin, also known as rifampin (RIF), leading to its inactivation. Confers high level resistance to a variety of clinically used rifamycin antibiotics. Does not show phosphoenolpyruvate (PEP) synthase activity. The polypeptide is Rifampicin phosphotransferase (Bacillus cereus (strain ATCC 14579 / DSM 31 / CCUG 7414 / JCM 2152 / NBRC 15305 / NCIMB 9373 / NCTC 2599 / NRRL B-3711)).